The primary structure comprises 459 residues: MAARHHAFILAGTGSGCGKTTVTLGLLRLLQKRALRVQPFKVGPDYLDTGWHTAICGVASRNLDSFMLPPPVLNALFCEQMRQADIAVIEGVMGLYDGYGVDPNYCSTAAMAKQLGCPVILLVDGKAVSTSLAATVMGFQHFDPTLNLAGVIVNRVTSDAHYQLLKNAIEHYCSLPVLGYVPPCDGVALPERHLGLITARESLVNQQSWHDFAATLEQTVDVDALLSLSVLSALPAGMWPERPDNTAGAGLTLALADDEAFNFYYPDNIDLLERAGVNIVRFSPLHDRALPDCQMIWLGGGYPELYAADLAANTVMLKHLRAAHQRGVAIYAECGGLMYLGSTLEDSGGEIHQMANIIPGHSKMGKRLTRFGYCEAQAMQPTLLAAPGEIVRGHEFHYSDFIPETPAVMACRKVRDGRVLQEWTGGWQTGNTFASYLHVHFAQRPEMLQHWLAAARRVL.

A GATase cobBQ-type domain is found at 252 to 446 (TLALADDEAF…LHVHFAQRPE (195 aa)). The active-site Nucleophile is Cys-334.

This sequence belongs to the CobB/CbiA family. As to quaternary structure, monomer. It depends on Mg(2+) as a cofactor.

It carries out the reaction cob(II)yrinate + 2 L-glutamine + 2 ATP + 2 H2O = cob(II)yrinate a,c diamide + 2 L-glutamate + 2 ADP + 2 phosphate + 2 H(+). It participates in cofactor biosynthesis; adenosylcobalamin biosynthesis; cob(II)yrinate a,c-diamide from sirohydrochlorin (anaerobic route): step 10/10. Functionally, catalyzes the ATP-dependent amidation of the two carboxylate groups at positions a and c of cobyrinate, using either L-glutamine or ammonia as the nitrogen source. Is able to use other nucleotide triphosphates as substrate, such as GTP or UTP, although less efficiently than ATP. This is Cobyrinate a,c-diamide synthase from Salmonella typhimurium (strain LT2 / SGSC1412 / ATCC 700720).